Reading from the N-terminus, the 409-residue chain is Glycosyltransferase GtfE (409 aa).

The protein belongs to the glycosyltransferase 28 family.

It participates in antibiotic biosynthesis; vancomycin biosynthesis. D-glucosyltransferase that acts on the aglycone core, transferring D-glucose to the phenolic hydroxyl of OH-Phegly(4) to form a devancoaminyl-vancomycin (DVV) intermediate in the biosynthesis of glycopeptide antibiotic vancomycin. Also able to glycosylate A47934, an antibiotic with a teicoplanin-like heptapeptide, but lacking sugar residues. This Amycolatopsis orientalis (Nocardia orientalis) protein is Glycosyltransferase GtfE (gtfE).